The following is a 344-amino-acid chain: uncharacterized protein (344 aa).

Belongs to the glycosyltransferase 28 family.

This is an uncharacterized protein from Methanopyrus kandleri (strain AV19 / DSM 6324 / JCM 9639 / NBRC 100938).